A 209-amino-acid polypeptide reads, in one-letter code: GTP cyclohydrolase-2 (209 aa).

A GTP-binding site is contributed by Arg49–Glu53. 3 residues coordinate Zn(2+): Cys54, Cys65, and Cys67. GTP contacts are provided by residues Gln70, Glu92–Arg94, and Thr114. Asp126 (proton acceptor) is an active-site residue. Arg128 (nucleophile) is an active-site residue. GTP-binding residues include Thr149 and Lys154.

The protein belongs to the GTP cyclohydrolase II family. Requires Zn(2+) as cofactor.

The enzyme catalyses GTP + 4 H2O = 2,5-diamino-6-hydroxy-4-(5-phosphoribosylamino)-pyrimidine + formate + 2 phosphate + 3 H(+). It functions in the pathway cofactor biosynthesis; riboflavin biosynthesis; 5-amino-6-(D-ribitylamino)uracil from GTP: step 1/4. Functionally, catalyzes the conversion of GTP to 2,5-diamino-6-ribosylamino-4(3H)-pyrimidinone 5'-phosphate (DARP), formate and pyrophosphate. This chain is GTP cyclohydrolase-2, found in Shewanella halifaxensis (strain HAW-EB4).